The chain runs to 195 residues: Protein GrpE (195 aa).

Positions 1 to 60 are disordered; the sequence is MAKDEEKNSQASAAPNEGEVKAKQEQTSAKEPAAKAGETEKVADLQKQVEELTKQLDDQK. Basic and acidic residues predominate over residues 37–60; the sequence is GETEKVADLQKQVEELTKQLDDQK.

This sequence belongs to the GrpE family. Homodimer.

It is found in the cytoplasm. In terms of biological role, participates actively in the response to hyperosmotic and heat shock by preventing the aggregation of stress-denatured proteins, in association with DnaK and GrpE. It is the nucleotide exchange factor for DnaK and may function as a thermosensor. Unfolded proteins bind initially to DnaJ; upon interaction with the DnaJ-bound protein, DnaK hydrolyzes its bound ATP, resulting in the formation of a stable complex. GrpE releases ADP from DnaK; ATP binding to DnaK triggers the release of the substrate protein, thus completing the reaction cycle. Several rounds of ATP-dependent interactions between DnaJ, DnaK and GrpE are required for fully efficient folding. The sequence is that of Protein GrpE from Limosilactobacillus fermentum (strain NBRC 3956 / LMG 18251) (Lactobacillus fermentum).